The following is a 367-amino-acid chain: Glutamate 5-kinase (367 aa).

K10 lines the ATP pocket. Substrate is bound by residues S50, D137, and N149. ATP-binding positions include 169 to 170 (TD) and 211 to 217 (TGGMSTK). A PUA domain is found at 275–353 (AGIITIDAGA…QDIEQVLGYE (79 aa)).

This sequence belongs to the glutamate 5-kinase family.

The protein localises to the cytoplasm. The catalysed reaction is L-glutamate + ATP = L-glutamyl 5-phosphate + ADP. Its pathway is amino-acid biosynthesis; L-proline biosynthesis; L-glutamate 5-semialdehyde from L-glutamate: step 1/2. Its function is as follows. Catalyzes the transfer of a phosphate group to glutamate to form L-glutamate 5-phosphate. This chain is Glutamate 5-kinase, found in Pasteurella multocida (strain Pm70).